The sequence spans 348 residues: Rhodopsin (348 aa).

At 1–33 (TEGPFFYIPMVNTSGVVRSPYEYPQYYLVNPAA) the chain is on the extracellular side. An N-linked (GlcNAc...) asparagine glycan is attached at Asn-12. Residues 34 to 58 (YAILGAYMFFLIIIGFPVNFMTLYV) traverse the membrane as a helical segment. The Cytoplasmic portion of the chain corresponds to 59-70 (TLEHKKLRTPLN). A helical membrane pass occupies residues 71-93 (YILLNLAVADLFMVIGGFTTTMY). The Extracellular portion of the chain corresponds to 94 to 107 (SSMHGYFVLGRLGC). Cys-107 and Cys-184 are disulfide-bonded. A helical membrane pass occupies residues 108–130 (NMEGFSATLGGMISLWSLAVLAI). Positions 131-133 (ERW) match the 'Ionic lock' involved in activated form stabilization motif. The Cytoplasmic segment spans residues 131–149 (ERWVVVCKPISNFRFGENH). A helical transmembrane segment spans residues 150–170 (AIMGVSLTWFMALACTVPPLV). Residues 171 to 199 (GWSRYIPEGMQCSCGIDYYTRAEGFNNES) lie on the Extracellular side of the membrane. Asn-197 is a glycosylation site (N-linked (GlcNAc...) asparagine). Residues 200–221 (FVLYMFFCHFLVPLVIIFFCYG) traverse the membrane as a helical segment. Over 222–249 (RLLCAVKEAAAAQQESETTQRAEREVTR) the chain is Cytoplasmic. The chain crosses the membrane as a helical span at residues 250–271 (MVIIMVIGFLVCWLPYASVAWF). Residues 272 to 283 (IFTHQGSEFGPL) lie on the Extracellular side of the membrane. The chain crosses the membrane as a helical span at residues 284–305 (FMTIPAFFAKSSSIYNPMIYIC). Lys-293 is subject to N6-(retinylidene)lysine. The Cytoplasmic portion of the chain corresponds to 306–348 (MNKQFRNCMITTLFCGKNPFEGEEEGASSTKTEASSASSVSPA). Residue Cys-320 is the site of S-palmitoyl cysteine attachment. A disordered region spans residues 327–348 (GEEEGASSTKTEASSASSVSPA). Low complexity predominate over residues 332–348 (ASSTKTEASSASSVSPA).

This sequence belongs to the G-protein coupled receptor 1 family. Opsin subfamily. Phosphorylated on some or all of the serine and threonine residues present in the C-terminal region. Post-translationally, contains one covalently linked retinal chromophore.

The protein resides in the membrane. The protein localises to the cell projection. It is found in the cilium. It localises to the photoreceptor outer segment. In terms of biological role, photoreceptor required for image-forming vision at low light intensity. While most salt water fish species use retinal as chromophore, most freshwater fish use 3-dehydroretinal, or a mixture of retinal and 3-dehydroretinal. Light-induced isomerization of 11-cis to all-trans retinal triggers a conformational change that activates signaling via G-proteins. Subsequent receptor phosphorylation mediates displacement of the bound G-protein alpha subunit by arrestin and terminates signaling. This Sargocentron punctatissimum (Speckled squirrelfish) protein is Rhodopsin (rho).